The chain runs to 587 residues: Protein NRT1/ PTR FAMILY 2.9 (587 aa).

A run of 12 helical transmembrane segments spans residues Phe35–Phe55, Val65–Asp85, Leu94–Ile114, Ile135–Ile155, Phe181–Val201, Trp209–Ala229, Cys325–Gln345, Ile368–Tyr388, Val412–Tyr432, Gly457–Gly477, Phe493–Leu513, and Tyr540–Ser560.

It belongs to the major facilitator superfamily. Proton-dependent oligopeptide transporter (POT/PTR) (TC 2.A.17) family. Expressed in roots, stems and major veins of the leaves. Detected in the companion cells of the root phloem.

The protein localises to the cell membrane. Its function is as follows. Low-affinity nitrate transporter facilitating nitrate loading into root phloem. Not involved in dipeptides transport, but has a weak glucosinolate transport activity. The protein is Protein NRT1/ PTR FAMILY 2.9 (NPF2.9) of Arabidopsis thaliana (Mouse-ear cress).